The following is a 286-amino-acid chain: MMMGQDEVGSDQTQIIKGKRTKRQRSSSTFVVTAATTVTSTSSSAGGSGGERAVSDEYNSAVSSPVTTDCTQEEEDMAICLIMLARGTVLPSPDLKNSRKIHQKISSENSSFYVYECKTCNRTFSSFQALGGHRASHKKPRTSTEEKTRLPLTQPKSSASEEGQNSHFKVSGSALASQASNIINKANKVHECSICGSEFTSGQALGGHMRRHRTAVTTISPVAATAEVSRNSTEEEIEINIGRSMEQQRKYLPLDLNLPAPEDDLRESKFQGIVFSATPALIDCHY.

3 disordered regions span residues 1 to 28 (MMMGQDEVGSDQTQIIKGKRTKRQRSSS), 40 to 60 (STSSSAGGSGGERAVSDEYNS), and 131 to 171 (GGHR…FKVS). The C2H2-type 1 zinc finger occupies 115–137 (YECKTCNRTFSSFQALGGHRASH). The span at 154–171 (QPKSSASEEGQNSHFKVS) shows a compositional bias: polar residues. A C2H2-type 2 zinc finger spans residues 190 to 212 (HECSICGSEFTSGQALGGHMRRH).

Expressed in flowers and siliques.

It is found in the nucleus. Probable transcription factor that may be involved in stress responses. The polypeptide is Zinc finger protein ZAT5 (ZAT5) (Arabidopsis thaliana (Mouse-ear cress)).